The chain runs to 168 residues: Pathogenesis-related protein 1A (168 aa).

Residues 1-30 (MGFVLFSQLPSFLLVSTLLLFLVISHSCRA) form the signal peptide. The region spanning 38–156 (LDAHNTARAD…NGGYVVSCNY (119 aa)) is the SCP domain.

This sequence belongs to the CRISP family. Post-translationally, three disulfide bonds are present.

It is found in the vacuole. Functionally, probably involved in the defense reaction of plants against pathogens. The protein is Pathogenesis-related protein 1A of Nicotiana tabacum (Common tobacco).